A 120-amino-acid chain; its full sequence is NAD(P)H-quinone oxidoreductase subunit 3, chloroplastic (120 aa).

3 helical membrane passes run 11–31 (VVFF…SKLI), 65–85 (FALI…WAIV), and 89–109 (LGIT…IGLV).

This sequence belongs to the complex I subunit 3 family. In terms of assembly, NDH is composed of at least 16 different subunits, 5 of which are encoded in the nucleus.

The protein localises to the plastid. It is found in the chloroplast thylakoid membrane. The enzyme catalyses a plastoquinone + NADH + (n+1) H(+)(in) = a plastoquinol + NAD(+) + n H(+)(out). It catalyses the reaction a plastoquinone + NADPH + (n+1) H(+)(in) = a plastoquinol + NADP(+) + n H(+)(out). In terms of biological role, NDH shuttles electrons from NAD(P)H:plastoquinone, via FMN and iron-sulfur (Fe-S) centers, to quinones in the photosynthetic chain and possibly in a chloroplast respiratory chain. The immediate electron acceptor for the enzyme in this species is believed to be plastoquinone. Couples the redox reaction to proton translocation, and thus conserves the redox energy in a proton gradient. This is NAD(P)H-quinone oxidoreductase subunit 3, chloroplastic from Mesostigma viride (Green alga).